We begin with the raw amino-acid sequence, 503 residues long: Glutamate--tRNA ligase (503 aa).

The 'HIGH' region motif lies at 9-19; it reads PSPTGDPHVGT. A 'KMSKS' region motif is present at residues 251–255; the sequence is KLSKR. Lys254 provides a ligand contact to ATP.

It belongs to the class-I aminoacyl-tRNA synthetase family. Glutamate--tRNA ligase type 1 subfamily. Monomer.

The protein resides in the cytoplasm. The catalysed reaction is tRNA(Glu) + L-glutamate + ATP = L-glutamyl-tRNA(Glu) + AMP + diphosphate. In terms of biological role, catalyzes the attachment of glutamate to tRNA(Glu) in a two-step reaction: glutamate is first activated by ATP to form Glu-AMP and then transferred to the acceptor end of tRNA(Glu). The polypeptide is Glutamate--tRNA ligase (Saccharophagus degradans (strain 2-40 / ATCC 43961 / DSM 17024)).